A 303-amino-acid polypeptide reads, in one-letter code: MDLRQFRYFVAVARERNFTRAARQLNIAQPPLSRQIQLLEEEVGVPLLIRNSRPVQLTDAGRLFFEQAIQVLGRVEQMQAATRRVGLHQRSVLSIGFVASTLYGVLPTLMRKLRQHAPELDIQMVELMSVQQIQAINEGRIDIGFGRVHHSDPNVSSIVLHEERLAVALPMESPMARESTPLPVHQLAGEKLIVYPKEPRPGFADQVLNILDRHDVQPGQVMEVREIQTALGLVAAEFGVCVIPASARQMRHDVHYRLIDGDRATSPVIVSHRANDSSKYISLTKQLIREMYAEHPAWLDTHN.

Residues 1–58 form the HTH lysR-type domain; the sequence is MDLRQFRYFVAVARERNFTRAARQLNIAQPPLSRQIQLLEEEVGVPLLIRNSRPVQLT. The H-T-H motif DNA-binding region spans 18-37; that stretch reads FTRAARQLNIAQPPLSRQIQ.

The protein belongs to the LysR transcriptional regulatory family.

Its function is as follows. Probable positive regulator of the cat1 operon which encode enzymes responsible for the degradation of catechol to acetyl-CoA via the beta-ketoadipate pathway. The chain is Probable cat1 operon transcriptional activator from Acinetobacter lwoffii.